A 185-amino-acid polypeptide reads, in one-letter code: Ribosome-recycling factor (185 aa).

Belongs to the RRF family.

It localises to the cytoplasm. Its function is as follows. Responsible for the release of ribosomes from messenger RNA at the termination of protein biosynthesis. May increase the efficiency of translation by recycling ribosomes from one round of translation to another. In Exiguobacterium sibiricum (strain DSM 17290 / CCUG 55495 / CIP 109462 / JCM 13490 / 255-15), this protein is Ribosome-recycling factor.